Reading from the N-terminus, the 147-residue chain is NADH-quinone oxidoreductase subunit A (147 aa).

3 helical membrane-spanning segments follow: residues Phe16–Phe36, Phe68–Trp88, and Val98–Val118.

It belongs to the complex I subunit 3 family. In terms of assembly, NDH-1 is composed of 13 different subunits. Subunits NuoA, H, J, K, L, M, N constitute the membrane sector of the complex.

It localises to the cell inner membrane. It carries out the reaction a quinone + NADH + 5 H(+)(in) = a quinol + NAD(+) + 4 H(+)(out). Its function is as follows. NDH-1 shuttles electrons from NADH, via FMN and iron-sulfur (Fe-S) centers, to quinones in the respiratory chain. The immediate electron acceptor for the enzyme in this species is believed to be ubiquinone. Couples the redox reaction to proton translocation (for every two electrons transferred, four hydrogen ions are translocated across the cytoplasmic membrane), and thus conserves the redox energy in a proton gradient. This chain is NADH-quinone oxidoreductase subunit A, found in Shigella boydii serotype 18 (strain CDC 3083-94 / BS512).